We begin with the raw amino-acid sequence, 100 residues long: Integration host factor subunit alpha (100 aa).

The segment at 54-73 (DLRDKRQRPGRNPKTGEEIP) is disordered.

Belongs to the bacterial histone-like protein family. In terms of assembly, heterodimer of an alpha and a beta chain.

This protein is one of the two subunits of integration host factor, a specific DNA-binding protein that functions in genetic recombination as well as in transcriptional and translational control. This is Integration host factor subunit alpha from Pseudomonas savastanoi pv. phaseolicola (strain 1448A / Race 6) (Pseudomonas syringae pv. phaseolicola (strain 1448A / Race 6)).